The sequence spans 539 residues: MKEAKFIFVTGGVVSSLGKGLVASSVGALLQAHGFKVRIRKLDPYLNIDPGTMSPTQHGEVFVTEDGAETDLDLGHYERFTGIKATKDDNITTGKMYHELLKKERRGDYLGKTVQVIPHVTDLIKSFIFNGTEGLDFVICEIGGTVGDIESQPFLEAIRQISYKLGKQRVILIHLTLVPYLAVAQELKTKPTQHSVRELNFVGLQPDIILCRSEKEISDNQRGKIANLCNVSLSNVISAPDVSHIYELPVLYNQCGLGTQVLEHFHLSKPKPSLVGWNQIVHSMRHPMQEVTVSIVGKYTEFPDTYKSLVEALSHSAISNRIEVKINWVNSREKSGKPINEKFMGDKLKNSHAILVPGGFGDDGIEGKMLAISYARTNNIPFFGICLGMQLAVIEFARNVIKFKDVHSEEFYTCKHPIIKLAGDKNVDLGGTMRLGAYKCNISPNSKMAGAYSDTIISERHRHRYIINLDYKDDLEKNGLICSGMSEDGTYIEAVELENHPWFIGVQFHPEFQSKPFSPHPLFVSFIKAVVNKVKKTEG.

The tract at residues 1-267 is amidoligase domain; sequence MKEAKFIFVT…GTQVLEHFHL (267 aa). Ser-15 is a binding site for CTP. A UTP-binding site is contributed by Ser-15. ATP-binding positions include 16 to 21 and Asp-73; that span reads SLGKGL. The Mg(2+) site is built by Asp-73 and Glu-141. Residues 148-150, 188-193, and Lys-224 contribute to the CTP site; these read DIE and KTKPTQ. Residues 188 to 193 and Lys-224 each bind UTP; that span reads KTKPTQ. The Glutamine amidotransferase type-1 domain occupies 292–536; the sequence is TVSIVGKYTE…IKAVVNKVKK (245 aa). Gly-359 lines the L-glutamine pocket. Cys-386 serves as the catalytic Nucleophile; for glutamine hydrolysis. L-glutamine-binding positions include 387–390, Glu-410, and Arg-464; that span reads LGMQ. Active-site residues include His-509 and Glu-511.

It belongs to the CTP synthase family. Homotetramer.

It catalyses the reaction UTP + L-glutamine + ATP + H2O = CTP + L-glutamate + ADP + phosphate + 2 H(+). The enzyme catalyses L-glutamine + H2O = L-glutamate + NH4(+). The catalysed reaction is UTP + NH4(+) + ATP = CTP + ADP + phosphate + 2 H(+). The protein operates within pyrimidine metabolism; CTP biosynthesis via de novo pathway; CTP from UDP: step 2/2. Allosterically activated by GTP, when glutamine is the substrate; GTP has no effect on the reaction when ammonia is the substrate. The allosteric effector GTP functions by stabilizing the protein conformation that binds the tetrahedral intermediate(s) formed during glutamine hydrolysis. Inhibited by the product CTP, via allosteric rather than competitive inhibition. Catalyzes the ATP-dependent amination of UTP to CTP with either L-glutamine or ammonia as the source of nitrogen. Regulates intracellular CTP levels through interactions with the four ribonucleotide triphosphates. The protein is CTP synthase of Wolbachia sp. subsp. Brugia malayi (strain TRS).